We begin with the raw amino-acid sequence, 132 residues long: Large ribosomal subunit protein uL14 (132 aa).

Belongs to the universal ribosomal protein uL14 family. As to quaternary structure, part of the 50S ribosomal subunit. Forms a cluster with proteins L3 and L24e, part of which may contact the 16S rRNA in 2 intersubunit bridges.

Its function is as follows. Binds to 23S rRNA. Forms part of two intersubunit bridges in the 70S ribosome. The chain is Large ribosomal subunit protein uL14 from Natronomonas pharaonis (strain ATCC 35678 / DSM 2160 / CIP 103997 / JCM 8858 / NBRC 14720 / NCIMB 2260 / Gabara) (Halobacterium pharaonis).